The sequence spans 192 residues: Sporulation initiation phosphotransferase B (192 aa).

Position 30 is a phosphohistidine (histidine 30).

Homodimer. Dimerization is essential for activity as both monomers contribute to the formation of the active site. Phosphorylated by spo0F.

It is found in the cytoplasm. In terms of biological role, key element in the phosphorelay regulating sporulation initiation. Acts on spo0A. Mediates reversible phosphoryl transfer from spo0F to spo0A. This is Sporulation initiation phosphotransferase B (spo0B) from Bacillus subtilis (strain 168).